The chain runs to 351 residues: Methylthioribose-1-phosphate isomerase (351 aa).

Residues 51–53 (RGA), Arg-94, and Gln-199 contribute to the substrate site. Asp-240 (proton donor) is an active-site residue. Residue 250 to 251 (NK) coordinates substrate.

This sequence belongs to the EIF-2B alpha/beta/delta subunits family. MtnA subfamily. Homodimer.

It catalyses the reaction 5-(methylsulfanyl)-alpha-D-ribose 1-phosphate = 5-(methylsulfanyl)-D-ribulose 1-phosphate. The protein operates within amino-acid biosynthesis; L-methionine biosynthesis via salvage pathway; L-methionine from S-methyl-5-thio-alpha-D-ribose 1-phosphate: step 1/6. Catalyzes the interconversion of methylthioribose-1-phosphate (MTR-1-P) into methylthioribulose-1-phosphate (MTRu-1-P). This Bacillus anthracis protein is Methylthioribose-1-phosphate isomerase.